A 4545-amino-acid polypeptide reads, in one-letter code: Prolow-density lipoprotein receptor-related protein 1 (4545 aa).

A signal peptide spans 1–19 (MLTPPLLLLLPLLSALVAG). Over 20–4424 (ATMDAPKTCS…SQQQPGHMTS (4405 aa)) the chain is Extracellular. LDL-receptor class A domains are found at residues 27–66 (TCSPKQFACRDQITCISKGWRCDGERDCPDGSDEAPEICP) and 72–110 (RCPPNEHSCLGTELCVPMSRLCNGIQDCMDGSDEGAHCR). Cystine bridges form between Cys28–Cys41, Cys35–Cys54, Cys48–Cys65, Cys73–Cys86, Cys80–Cys99, and Cys93–Cys109. N-linked (GlcNAc...) asparagine glycans are attached at residues Asn115, Asn137, Asn186, Asn240, and Asn275. 3 LDL-receptor class B repeats span residues 293 to 335 (GNFY…DPAM), 336 to 379 (GKVF…DLVS), and 380 to 423 (RLVY…FENY). N-linked (GlcNAc...) asparagine glycosylation is present at Asn358. The N-linked (GlcNAc...) asparagine glycan is linked to Asn447. 4 LDL-receptor class B repeats span residues 572-614 (GFIY…DWMG), 615-660 (DNLY…DPLN), 661-711 (GWMY…DIPA), and 712-755 (GRLY…HGNY). Residues 639 to 671 (TRKTLIEGKMTHPRAIVVDPLNGWMYWTDWEED) form an HAT 1 repeat. Asn730 is a glycosylation site (N-linked (GlcNAc...) asparagine). LDL-receptor class A domains are found at residues 854–892 (QCQPGEFACANNRCIQERWKCDGDNDCLDNSDEAPALCH), 895–933 (TCPSDRFKCENNRCIPNRWLCDGDNDCGNSEDESNATCS), 936–973 (TCPPNQFSCASGRCIPISWTCDLDDDCGDRSDESASCA), 976–1013 (TCFPLTQFTCNNGRCININWRCDNDNDCGDNSDEAGCS), 1015–1053 (SCSSTQFKCNSGRCIPEHWTCDGDNDCGDYSDETHANCT), 1062–1099 (GCHSDEFQCRLDGLCIPLRWRCDGDTDCMDSSDEKGCE), 1104–1142 (VCDPNVKFGCKDSARCISKAWVCDGDSDCEDNSDEENCE), and 1145–1184 (ACRPPSHPCANNTSVCLSPDKLCDGKDDCGDGSDEGELCD). 24 cysteine pairs are disulfide-bonded: Cys855–Cys867, Cys862–Cys880, Cys874–Cys891, Cys896–Cys908, Cys903–Cys921, Cys915–Cys932, Cys937–Cys949, Cys944–Cys962, Cys956–Cys972, Cys977–Cys990, Cys985–Cys1003, Cys997–Cys1012, Cys1016–Cys1028, Cys1023–Cys1041, Cys1035–Cys1052, Cys1063–Cys1076, Cys1070–Cys1089, Cys1083–Cys1098, Cys1105–Cys1119, Cys1113–Cys1132, Cys1126–Cys1141, Cys1146–Cys1160, Cys1153–Cys1173, and Cys1167–Cys1183. Residues Trp872, Asp875, Asp877, Asp879, Asp885, and Glu886 each coordinate Ca(2+). Residue Asn929 is glycosylated (N-linked (GlcNAc...) asparagine). The Ca(2+) site is built by Trp1033, Asp1036, Asp1038, Asp1040, Asp1046, and Glu1047. Asn1051 is a glycosylation site (N-linked (GlcNAc...) asparagine). 6 residues coordinate Ca(2+): Trp1081, Asp1084, Asp1086, Asp1088, Asp1094, and Glu1095. Asn1156 is a glycosylation site (N-linked (GlcNAc...) asparagine). Asn1196 and Asn1219 each carry an N-linked (GlcNAc...) asparagine glycan. 5 LDL-receptor class B repeats span residues 1310 to 1356 (SALY…DWIA), 1357 to 1399 (GNIY…DPRD), 1400 to 1446 (GILF…DYLE), 1447 to 1491 (KRIL…YGGE), and 1492 to 1532 (VYWT…YHPS). HAT repeat units follow at residues 1380–1413 (TTLLAGDIEHPRAIALDPRDGILFWTDWDASLPR) and 1470–1503 (MEVLRGHEFLSHPFAVTLYGGEVYWTDWRTNTLA). N-linked (GlcNAc...) asparagine glycosylation is found at Asn1512, Asn1559, Asn1576, Asn1617, and Asn1646. LDL-receptor class B repeat units lie at residues 1628-1670 (QRVY…DWVS), 1671-1714 (RNLF…HPLR), 1715-1754 (GKLYWTDGDNISMVNMDGSNRTLLFSGQKGPVGLAIDFPE), and 1755-1799 (SKLY…MGDK). The HAT 4 repeat unit spans residues 1653–1684 (VVSADLPNAHGLAVDWVSRNLFWTSYDTNKKQ). N-linked (GlcNAc...) asparagine glycosylation is found at Asn1724, Asn1734, Asn1764, Asn1826, and Asn1934. LDL-receptor class B repeat units lie at residues 1935 to 1977 (DTIY…DWIA), 1978 to 2020 (GNIY…HPEK), 2021 to 2064 (GYLF…DYQG), and 2065 to 2108 (GKLY…FEDF). N-linked (GlcNAc...) asparagine glycosylation occurs at Asn1996. Lys2010 is modified (N6-acetyllysine). Residue Asn2049 is glycosylated (N-linked (GlcNAc...) asparagine). 2 N-linked (GlcNAc...) asparagine glycosylation sites follow: Asn2118 and Asn2128. 5 LDL-receptor class B repeats span residues 2254–2295 (NRIF…HRGW), 2296–2344 (DTLY…DECQ), 2345–2389 (NLMF…DHRA), 2390–2432 (EKLY…YGEH), and 2433–2474 (IFWT…VAND). HAT repeat units follow at residues 2277–2309 (TTIVENVGSVEGLAYHRGWDTLYWTSYTTSTIT), 2325–2358 (TVITMSGDDHPRAFVLDECQNLMFWTNWNELHPS), and 2411–2444 (HRYVILKSEPVHPFGLAVYGEHIFWTDWVRRAVQ). N-linked (GlcNAc...) asparagine glycans are attached at residues Asn2473, Asn2503, and Asn2522. 7 LDL-receptor class A domains span residues 2524–2563 (SCRAQDEFECANGECISFSLTCDGVSHCKDKSDEKPSYCN), 2566–2602 (RCKKTFRQCNNGRCVSNMLWCNGVDDCGDGSDEIPCN), 2605–2641 (ACGVGEFRCRDGSCIGNSSRCNQFVDCEDASDEMNCS), 2639–2690 (NCSA…RDCP), 2696–2732 (RCPLNYFACPSGRCIPMSWTCDKEDDCENGEDETHCN), 2734–2771 (FCSEAQFECQNHRCISKQWLCDGSDDCGDGSDEAAHCE), and 2774–2814 (TCGP…AGCL). 6 disulfides stabilise this stretch: Cys2525–Cys2538, Cys2533–Cys2551, Cys2545–Cys2562, Cys2567–Cys2579, Cys2574–Cys2592, and Cys2586–Cys2601. N-linked (GlcNAc...) asparagine glycosylation is present at Asn2602. Cystine bridges form between Cys2606–Cys2618, Cys2613–Cys2631, Cys2625–Cys2640, Cys2640–Cys2667, Cys2645–Cys2680, Cys2674–Cys2689, Cys2697–Cys2709, Cys2704–Cys2722, Cys2716–Cys2731, Cys2735–Cys2747, Cys2742–Cys2760, Cys2754–Cys2770, Cys2775–Cys2788, Cys2782–Cys2801, and Cys2795–Cys2813. N-linked (GlcNAc...) asparagine glycosylation is found at Asn2621 and Asn2639. Asn2816 carries N-linked (GlcNAc...) asparagine glycosylation. LDL-receptor class A domains are found at residues 2818–2855 (TCDDREFMCQNRLCIPKHFVCDHDRDCADGSDESPECE), 2858–2899 (TCGP…PHCT), and 2904–2941 (KCNASSQFLCSSGRCVAEALLCNGQDDCGDGSDERGCH). 11 cysteine pairs are disulfide-bonded: Cys2819-Cys2831, Cys2826-Cys2844, Cys2838-Cys2854, Cys2859-Cys2871, Cys2866-Cys2885, Cys2879-Cys2898, Cys2905-Cys2918, Cys2913-Cys2931, Cys2925-Cys2940, Cys2987-Cys2997, and Cys2993-Cys3006. Asn2906 carries N-linked (GlcNAc...) asparagine glycosylation. In terms of domain architecture, EGF-like 1; calcium-binding spans 2983–3018 (DVDECSTTFPCSQLCINTHGSYKCLCVEGYAPRGGD). Asn3049 and Asn3090 each carry an N-linked (GlcNAc...) asparagine glycan. 5 LDL-receptor class B repeats span residues 3070–3114 (QMIY…DWVG), 3115–3157 (GNLY…DVQN), 3158–3201 (GYLY…DYVT), 3202–3244 (ERIY…FEDY), and 3245–3285 (VYWT…FHAL). HAT repeat units follow at residues 3128 to 3171 (EVSK…HSLI) and 3224 to 3256 (RHVVLSQDIPHIFALTLFEDYVYWTDWETKSIN). N-linked (GlcNAc...) asparagine glycosylation is found at Asn3265 and Asn3334. LDL-receptor class A domains follow at residues 3334 to 3371 (NCTASQFVCKNDKCIPFWWKCDTEDDCGDHSDEPPDCP), 3374 to 3410 (KCRPGQFQCSTGICTNPAFICDGDNDCQDNSDEANCD), 3413 to 3450 (VCLPSQFKCTNTNRCIPGIFRCNGQDNCGDGEDERDCP), 3453 to 3491 (TCAPNQFQCSITKRCIPRVWVCDRDNDCVDGSDEPANCT), 3494 to 3533 (TCGVDEFRCKDSGRCIPARWKCDGEDDCGDGSDEPKEECD), 3536 to 3572 (TCEPYQFRCKNNRCVPGRWQCDYDNDCGDNSDEESCT), 3575 to 3611 (PCSESEFSCANGRCIAGRWKCDGDHDCADGSDEKDCT), 3613 to 3649 (RCDMDQFQCKSGHCIPLRWRCDADADCMDGSDEEACG), 3654 to 3692 (TCPLDEFQCNNTLCKPLAWKCDGEDDCGDNSDENPEECT), 3695 to 3733 (QCPPNRPFRCKNDRVCLWIGRQCDGTDNCGDGTDEEDCE), and 3741 to 3778 (HCKDKKEFLCRNQRCLSSSLRCNMFDDCGDGSDEEDCS). 33 disulfide bridges follow: Cys3335–Cys3347, Cys3342–Cys3360, Cys3354–Cys3370, Cys3375–Cys3387, Cys3382–Cys3400, Cys3394–Cys3409, Cys3414–Cys3427, Cys3421–Cys3440, Cys3434–Cys3449, Cys3454–Cys3467, Cys3461–Cys3480, Cys3474–Cys3490, Cys3495–Cys3508, Cys3502–Cys3521, Cys3515–Cys3532, Cys3537–Cys3549, Cys3544–Cys3562, Cys3556–Cys3571, Cys3576–Cys3588, Cys3583–Cys3601, Cys3595–Cys3610, Cys3614–Cys3626, Cys3621–Cys3639, Cys3633–Cys3648, Cys3655–Cys3667, Cys3662–Cys3680, Cys3674–Cys3691, Cys3696–Cys3710, Cys3704–Cys3723, Cys3717–Cys3732, Cys3742–Cys3755, Cys3750–Cys3768, and Cys3762–Cys3777. Asn3489 is a glycosylation site (N-linked (GlcNAc...) asparagine). Asn3663 is a glycosylation site (N-linked (GlcNAc...) asparagine). N-linked (GlcNAc...) asparagine glycosylation is found at Asn3789 and Asn3840. One copy of the LDL-receptor class B 31 repeat lies at 3913-3925 (GRVYWTNWHTGTI). Asn3954 carries N-linked (GlcNAc...) asparagine glycosylation. LDL-receptor class B repeat units follow at residues 3971-4013 (GNVY…DPLR), 4014-4057 (GTMY…DYHN), and 4058-4102 (ERLY…FEDY). The stretch at 3995–4027 (TLISGMIDEPHAIVVDPLRGTMYWSDWGNHPKI) is one HAT 10 repeat. Residues Asn4076, Asn4126, and Asn4180 are each glycosylated (N-linked (GlcNAc...) asparagine). 4 EGF-like domains span residues 4197–4230 (RPGTCTLQCFNGGSCFLNARRQPKCRCQPRYTGD), 4233–4269 (ELDQCWEYCHNGGTCAASPSGMPTCRCPTGFTGPRCT), 4270–4302 (QQVCAGYCANNSTCTVNQGNQPQCRCLPGFLGD), and 4305–4341 (QYRQCSGFCENFGTCQMAADGSRQCRCTVYFEGTRCE). Disulfide bonds link Cys4201-Cys4211, Cys4205-Cys4221, Cys4237-Cys4247, Cys4241-Cys4257, Cys4259-Cys4268, Cys4273-Cys4283, Cys4277-Cys4293, Cys4309-Cys4319, Cys4313-Cys4329, and Cys4331-Cys4340. N-linked (GlcNAc...) asparagine glycosylation is present at Asn4280. An N-linked (GlcNAc...) asparagine glycan is attached at Asn4365. The 35-residue stretch at 4376-4410 (LTCIDHCSNGGSCTMNSKMMPECQCPPHMTGPRCE) folds into the EGF-like 6 domain. Intrachain disulfides connect Cys4378–Cys4388, Cys4382–Cys4398, and Cys4400–Cys4409. The helical transmembrane segment at 4425-4445 (ILIPLLLLLLLLLVAGVVFWY) threads the bilayer. Topologically, residues 4446–4545 (KRRVRGAKGF…PEDEIGDPLA (100 aa)) are cytoplasmic. The interval 4446 to 4545 (KRRVRGAKGF…PEDEIGDPLA (100 aa)) is interaction with MAFB. Thr4461 is modified (phosphothreonine). Tyr4508 carries the phosphotyrosine modification. Ser4518, Ser4521, and Ser4524 each carry phosphoserine.

It belongs to the LDLR family. In terms of assembly, heterodimer of an 85-kDa membrane-bound carboxyl subunit and a non-covalently attached 515-kDa N-terminal subunit. Intracellular domain interacts with MAFB. Found in a complex with PID1/PCLI1, LRP1 and CUBNI. Interacts with SNX17, PID1/PCLI1, PDGF and CUBN. The intracellular domain interacts with SHC1, GULP1 and DAB1. Can weakly interact (via NPXY motif) with DAB2 (via PID domain); the interaction is enhanced by tyrosine phosphorylation of the NPXY motif. Interacts with MDK; promotes neuronal survival. Interacts with LRPAP1; this interaction is followed by rapid internalization. Interacts with uPA/PLAU and PAI1/SERPINE1, either individually or in complex with each other, leading to rapid endocytosis; this interaction is abolished in the presence of LRPAP1/RAP. Also interacts with tPA/PLAT alone or in complex with SERPINE1. Interacts with the urokinase receptor PLAUR; this interaction leads to PLAUR internalization and is impaired in the presence of SORL1. Interacts with PDGFB. Interacts with TAU/MAPT, leading to endocytosis; this interaction is reduced in the presence of LRPAP1/RAP. Interacts with IGFBP3. Interacts with ADGRG6. Cleaved into a 85 kDa membrane-spanning subunit (LRP-85) and a 515 kDa large extracellular domain (LRP-515) that remains non-covalently associated. Gamma-secretase-dependent cleavage of LRP-85 releases the intracellular domain from the membrane. In terms of processing, phosphorylated on serine and threonine residues. Post-translationally, phosphorylated on tyrosine residues upon stimulation with PDGF. Tyrosine phosphorylation promotes interaction with SHC1.

Its subcellular location is the cell membrane. The protein resides in the membrane. The protein localises to the coated pit. It localises to the golgi outpost. It is found in the cytoplasm. Its subcellular location is the cytoskeleton. The protein resides in the microtubule organizing center. The protein localises to the nucleus. In terms of biological role, endocytic receptor involved in endocytosis and in phagocytosis of apoptotic cells. Required for early embryonic development. Involved in cellular lipid homeostasis. Involved in the plasma clearance of chylomicron remnants and activated LRPAP1 (alpha 2-macroglobulin), as well as the local metabolism of complexes between plasminogen activators and their endogenous inhibitors. Acts as an LRPAP1 alpha-2-macroglobulin receptor. Acts as a TAU/MAPT receptor and controls the endocytosis of TAU/MAPT as well as its subsequent spread. May modulate cellular events, such as APP metabolism, kinase-dependent intracellular signaling, neuronal calcium signaling as well as neurotransmission. Also acts as a receptor for IGFBP3 to mediate cell growth inhibition. The protein is Prolow-density lipoprotein receptor-related protein 1 of Rattus norvegicus (Rat).